Consider the following 367-residue polypeptide: Glutamate 5-kinase (367 aa).

ATP is bound at residue lysine 10. The substrate site is built by serine 50, aspartate 137, and asparagine 149. Residues 169–170 and 211–217 contribute to the ATP site; these read TD and TGGMSTK. Residues 275 to 353 form the PUA domain; the sequence is AGEITVDEGA…QQIDAILGYE (79 aa).

This sequence belongs to the glutamate 5-kinase family.

It localises to the cytoplasm. The enzyme catalyses L-glutamate + ATP = L-glutamyl 5-phosphate + ADP. It functions in the pathway amino-acid biosynthesis; L-proline biosynthesis; L-glutamate 5-semialdehyde from L-glutamate: step 1/2. Catalyzes the transfer of a phosphate group to glutamate to form L-glutamate 5-phosphate. The polypeptide is Glutamate 5-kinase (Salmonella agona (strain SL483)).